A 226-amino-acid polypeptide reads, in one-letter code: Ribosomal RNA small subunit methyltransferase G (226 aa).

S-adenosyl-L-methionine contacts are provided by residues Gly-95, Leu-100, 146-147 (VE), and Arg-159.

This sequence belongs to the methyltransferase superfamily. RNA methyltransferase RsmG family.

The protein resides in the cytoplasm. The enzyme catalyses guanosine(527) in 16S rRNA + S-adenosyl-L-methionine = N(7)-methylguanosine(527) in 16S rRNA + S-adenosyl-L-homocysteine. Its function is as follows. Specifically methylates the N7 position of guanine in position 527 of 16S rRNA. This Acidovorax sp. (strain JS42) protein is Ribosomal RNA small subunit methyltransferase G.